A 294-amino-acid polypeptide reads, in one-letter code: MFKSGFISIIGRPNVGKSTLTNEILGEKLSIVSCRPQTTRNNIRAVLTRDDYQLVFLDTPGIHKPRHKLGEYMVKAAETSTDEVDLIVFITTPEGEISKGDELILEGLKNSKKPVFLVINKIDENPQELVAKTLKQYSEYMDFAEIIPISARKSKNVDTLLELMIKYMPEGPKYYPEDMITDVQERFVVSEIIREKALKLLSEEVPHGIAVEIISMKQSKRGTYHIDANLLCEKDSHKGIIIGKGGQKLKTISTYARQDIEKFLDAKVNLKVWVKVKKEWRDSNFMLKELGYKE.

An Era-type G domain is found at 3-170 (KSGFISIIGR…LELMIKYMPE (168 aa)). Residues 11-18 (GRPNVGKS) form a G1 region. Residue 11–18 (GRPNVGKS) participates in GTP binding. Positions 37–41 (QTTRN) are G2. Residues 58 to 61 (DTPG) form a G3 region. Residues 58-62 (DTPGI) and 120-123 (NKID) contribute to the GTP site. Residues 120–123 (NKID) form a G4 region. Residues 149–151 (ISA) form a G5 region. Positions 201–278 (LSEEVPHGIA…NLKVWVKVKK (78 aa)) constitute a KH type-2 domain.

Belongs to the TRAFAC class TrmE-Era-EngA-EngB-Septin-like GTPase superfamily. Era GTPase family. Monomer.

It localises to the cytoplasm. The protein resides in the cell membrane. Functionally, an essential GTPase that binds both GDP and GTP, with rapid nucleotide exchange. Plays a role in 16S rRNA processing and 30S ribosomal subunit biogenesis and possibly also in cell cycle regulation and energy metabolism. The polypeptide is GTPase Era (Clostridium novyi (strain NT)).